Consider the following 347-residue polypeptide: METSLISPMKENNTAQPQQREENTQQNLNAAVPIKQQSPGLLPEALEVGVKPDPASQILATQEIENPVAGFEGDSDKFHISTDEMAEHLQASDLWYCPDGSFVKKIIVHGHGLDKPKLGSKCRVLALGFPFGSGMPEGWTELTIGTGQWREKTWGELTEKCLESMRQGEEAKIHLPGSSTPLAKLRLDSFTNGRDSWELEAVEKEALAKEEHRRGTELFRAGNPQGAARCYGRALRLLLTLPPPGPPERTILHANLAACQLLLGHPQLAAQSCDRVLEREPGHLKALYRRGVAQAALGDLDKATADLKKVLAVDPKNRAAKEELGKVVIQGKIQDAGLARGLRKMFS.

Positions 1 to 36 (METSLISPMKENNTAQPQQREENTQQNLNAAVPIKQ) are disordered. At Thr3 the chain carries Phosphothreonine. TPR repeat units follow at residues 208–241 (AKEE…LLTL), 250–283 (TILH…EPGH), and 284–317 (LKAL…DPKN).

As to quaternary structure, forms a ternary complex with CDKN1A/p21 and HSP90AB1/Hsp90.

May be involved in response to X-ray. Regulates p21 protein stability by binding to Hsp90 and p21. The protein is FK506-binding protein-like (Fkbpl) of Rattus norvegicus (Rat).